The following is a 194-amino-acid chain: uncharacterized protein (194 aa).

A signal peptide spans 1-29 (MKKAFLVFLSVVLVTTVFLVKQQESVAQA). Residues 104–131 (KVDELLKKAGQIVEEKVEAAKEIAASKD) adopt a coiled-coil conformation. A helical membrane pass occupies residues 149-171 (YFYYVSYVAAAGALILIILAIDI).

Its subcellular location is the membrane. This is an uncharacterized protein from Bacillus subtilis (strain 168).